Consider the following 238-residue polypeptide: 14-3-3 family protein artA (238 aa).

It belongs to the 14-3-3 family.

Functionally, 14-3-3 family protein that plays a role in the morphological differentiation and secondary metabolism biosynthesis. Required for normal fungal morphogenesis in an environment-dependent manner, affecting the balance between production of conidiophores and the formation of sclerotia, resistant structures that are necessary for the dissemination and survival. Acts as a positive regulator of conidiation and a negative regulator of sclerotial production. Also regulates the production of secondary metabolites such as aflatoxin, but also the indole-tetramic acid mycotoxin cyclopiazonic acid (CPA) and ustiloxin, an inhibitor of microtubule assembly. This chain is 14-3-3 family protein artA, found in Aspergillus flavus (strain ATCC 200026 / FGSC A1120 / IAM 13836 / NRRL 3357 / JCM 12722 / SRRC 167).